Consider the following 88-residue polypeptide: Cell division topological specificity factor (88 aa).

It belongs to the MinE family.

Its function is as follows. Prevents the cell division inhibition by proteins MinC and MinD at internal division sites while permitting inhibition at polar sites. This ensures cell division at the proper site by restricting the formation of a division septum at the midpoint of the long axis of the cell. This chain is Cell division topological specificity factor, found in Clostridium botulinum (strain Alaska E43 / Type E3).